We begin with the raw amino-acid sequence, 311 residues long: Pyrimidine-specific ribonucleoside hydrolase RihA (311 aa).

Residue His-240 is part of the active site.

It belongs to the IUNH family. RihA subfamily.

Its function is as follows. Hydrolyzes with equal efficiency cytidine or uridine to ribose and cytosine or uracil, respectively. The protein is Pyrimidine-specific ribonucleoside hydrolase RihA of Escherichia coli O17:K52:H18 (strain UMN026 / ExPEC).